Reading from the N-terminus, the 213-residue chain is Adenylate kinase (213 aa).

Residue 10–15 (GAGKGT) coordinates ATP. Positions 30-59 (AVGDIFRTIIKTSTSEAELINNYVKQGALI) are NMP. AMP is bound by residues Arg36, 57–59 (ALI), 85–88 (GYPR), and Gln92. Residues 123 to 161 (GRYSCKNCGKIYNIHFLQPKIEHVCDVCSSSVFDYRKDD) are LID. Arg124 serves as a coordination point for ATP. 2 residues coordinate Zn(2+): Cys127 and Cys130. 133-134 (IY) contacts ATP. Cys147 and Cys150 together coordinate Zn(2+). AMP is bound by residues Arg158 and Arg169. Lys197 lines the ATP pocket.

This sequence belongs to the adenylate kinase family. Monomer.

Its subcellular location is the cytoplasm. It catalyses the reaction AMP + ATP = 2 ADP. Its pathway is purine metabolism; AMP biosynthesis via salvage pathway; AMP from ADP: step 1/1. In terms of biological role, catalyzes the reversible transfer of the terminal phosphate group between ATP and AMP. Plays an important role in cellular energy homeostasis and in adenine nucleotide metabolism. The sequence is that of Adenylate kinase from Rickettsia prowazekii (strain Madrid E).